The primary structure comprises 180 residues: Pro-glucagon (180 aa).

Residues 1–20 form the signal peptide; the sequence is MKTVYIVAGLFVMLVQGSWQ. The tract at residues 23 to 59 is disordered; that stretch reads PQDTEENARSFPASQTEPLEDPDQINEDKRHSQGTFT. S54 carries the post-translational modification Phosphoserine. The propeptide occupies 84–89; it reads NRNNIA. 2 positions are modified to phosphoserine: S105 and S108. An Arginine amide modification is found at R127. The propeptide occupies 131 to 145; the sequence is DFPEEVAIAEELGRR. Phosphoserine is present on residues S150 and S152.

This sequence belongs to the glucagon family. Post-translationally, proglucagon is post-translationally processed in a tissue-specific manner in pancreatic A cells and intestinal L cells. In pancreatic A cells, the major bioactive hormone is glucagon cleaved by PCSK2/PC2. In the intestinal L cells PCSK1/PC1 liberates GLP-1, GLP-2, glicentin and oxyntomodulin. GLP-1 is further N-terminally truncated by post-translational processing in the intestinal L cells resulting in GLP-1(7-37) GLP-1-(7-36)amide. The C-terminal amidation is neither important for the metabolism of GLP-1 nor for its effects on the endocrine pancreas. Glucagon is secreted in the A cells of the islets of Langerhans. GLP-1, GLP-2, oxyntomodulin and glicentin are secreted from enteroendocrine cells throughout the gastrointestinal tract.

It is found in the secreted. Its function is as follows. Plays a key role in glucose metabolism and homeostasis. Regulates blood glucose by increasing gluconeogenesis and decreasing glycolysis. A counterregulatory hormone of insulin, raises plasma glucose levels in response to insulin-induced hypoglycemia. Plays an important role in initiating and maintaining hyperglycemic conditions in diabetes. In terms of biological role, potent stimulator of glucose-dependent insulin release. Also stimulates insulin release in response to IL6. Plays important roles on gastric motility and the suppression of plasma glucagon levels. May be involved in the suppression of satiety and stimulation of glucose disposal in peripheral tissues, independent of the actions of insulin. Has growth-promoting activities on intestinal epithelium. May also regulate the hypothalamic pituitary axis (HPA) via effects on LH, TSH, CRH, oxytocin, and vasopressin secretion. Increases islet mass through stimulation of islet neogenesis and pancreatic beta cell proliferation. Inhibits beta cell apoptosis. Stimulates intestinal growth and up-regulates villus height in the small intestine, concomitant with increased crypt cell proliferation and decreased enterocyte apoptosis. The gastrointestinal tract, from the stomach to the colon is the principal target for GLP-2 action. Plays a key role in nutrient homeostasis, enhancing nutrient assimilation through enhanced gastrointestinal function, as well as increasing nutrient disposal. Stimulates intestinal glucose transport and decreases mucosal permeability. Functionally, may modulate gastric acid secretion and the gastro-pyloro-duodenal activity. May play an important role in intestinal mucosal growth in the early period of life. Its function is as follows. Oxyntomodulin significantly reduces food intake. The chain is Pro-glucagon (Gcg) from Rattus norvegicus (Rat).